A 622-amino-acid polypeptide reads, in one-letter code: Prolactin receptor (622 aa).

The signal sequence occupies residues 1–24 (MKENVASATVFTLLLFLNTCLLNG). Over 25–234 (QLPPGKPEIF…QIPSDFTMND (210 aa)) the chain is Extracellular. Fibronectin type-III domains are found at residues 27–128 (PPGK…VQPD) and 129–229 (PPLE…IPSD). Cysteines 36 and 46 form a disulfide. N59 carries N-linked (GlcNAc...) asparagine glycosylation. C75 and C86 are disulfide-bonded. The N-linked (GlcNAc...) asparagine glycan is linked to N104. The Zn(2+) site is built by D211 and H212. The short motif at 215–219 (WSAWS) is the WSXWS motif element. Residue N233 is glycosylated (N-linked (GlcNAc...) asparagine). A helical transmembrane segment spans residues 235-258 (TTVWISVAVLSAVICLIIVWAVAL). The Cytoplasmic segment spans residues 259-622 (KGYSMVTCIF…DPACFTHSFH (364 aa)). The Box 1 motif signature appears at 267 to 275 (IFPPVPGPK). Disordered stretches follow at residues 326–378 (MSVH…YDPE), 461–505 (SSQT…GSAK), and 520–545 (ALSL…NNKE). The span at 466–486 (KSREEGKATQQREVESFHSET) shows a compositional bias: basic and acidic residues.

The protein belongs to the type I cytokine receptor family. Type 1 subfamily. Homodimer upon hormone binding. Interacts with SMARCA1. Interacts with GH1. Interacts with CSH. Interacts with NEK3 and VAV2 and this interaction is prolactin-dependent. As to expression, expressed in breast, placenta, kidney, liver and pancreas.

The protein resides in the membrane. The protein localises to the secreted. This is a receptor for the anterior pituitary hormone prolactin (PRL). Acts as a prosurvival factor for spermatozoa by inhibiting sperm capacitation through suppression of SRC kinase activation and stimulation of AKT. Isoform 4 is unable to transduce prolactin signaling. Isoform 6 is unable to transduce prolactin signaling. The polypeptide is Prolactin receptor (PRLR) (Homo sapiens (Human)).